Consider the following 254-residue polypeptide: Guanylate kinase (254 aa).

The 180-residue stretch at 64–243 (KHLVVLAGPT…AAREVVDLMM (180 aa)) folds into the Guanylate kinase-like domain. 71–78 (GPTAVGKG) contacts ATP.

This sequence belongs to the guanylate kinase family.

It is found in the cytoplasm. The enzyme catalyses GMP + ATP = GDP + ADP. Functionally, essential for recycling GMP and indirectly, cGMP. The polypeptide is Guanylate kinase (Leifsonia xyli subsp. xyli (strain CTCB07)).